Here is a 176-residue protein sequence, read N- to C-terminus: MIRTKNIFLIGPVGAGKSTIGKQLAKQLKLEFIDSDDVIEKKCGVDINWIFDLEGEEGFRKREREVISEILAEKQNIVLATGGGAILDPETRSLLSSRGKVVYLEATIEQQLERTSKDTKRPLLRVDDKRPVLEQLMAEREPLYRSIADVVVETNGATVKNIVNKISTFLVEETIL.

14–19 serves as a coordination point for ATP; sequence GAGKST. Serine 18 is a Mg(2+) binding site. 3 residues coordinate substrate: aspartate 36, arginine 60, and glycine 83. Arginine 121 serves as a coordination point for ATP. Arginine 140 lines the substrate pocket.

The protein belongs to the shikimate kinase family. As to quaternary structure, monomer. Mg(2+) serves as cofactor.

The protein resides in the cytoplasm. The enzyme catalyses shikimate + ATP = 3-phosphoshikimate + ADP + H(+). It functions in the pathway metabolic intermediate biosynthesis; chorismate biosynthesis; chorismate from D-erythrose 4-phosphate and phosphoenolpyruvate: step 5/7. Its function is as follows. Catalyzes the specific phosphorylation of the 3-hydroxyl group of shikimic acid using ATP as a cosubstrate. In Francisella tularensis subsp. holarctica (strain FTNF002-00 / FTA), this protein is Shikimate kinase.